The primary structure comprises 497 residues: Probable cytosol aminopeptidase (497 aa).

2 residues coordinate Mn(2+): K263 and D268. The active site involves K275. The Mn(2+) site is built by D286, D345, and E347. R349 is an active-site residue.

The protein belongs to the peptidase M17 family. The cofactor is Mn(2+).

Its subcellular location is the cytoplasm. It carries out the reaction Release of an N-terminal amino acid, Xaa-|-Yaa-, in which Xaa is preferably Leu, but may be other amino acids including Pro although not Arg or Lys, and Yaa may be Pro. Amino acid amides and methyl esters are also readily hydrolyzed, but rates on arylamides are exceedingly low.. It catalyses the reaction Release of an N-terminal amino acid, preferentially leucine, but not glutamic or aspartic acids.. Functionally, presumably involved in the processing and regular turnover of intracellular proteins. Catalyzes the removal of unsubstituted N-terminal amino acids from various peptides. The sequence is that of Probable cytosol aminopeptidase from Brucella ovis (strain ATCC 25840 / 63/290 / NCTC 10512).